Consider the following 242-residue polypeptide: Fibrinolytic enzyme, isozyme C (242 aa).

Residues 1–242 (VIGGTNASPG…YLGWIGDNSR (242 aa)) form the Peptidase S1 domain. C29 and C45 are joined by a disulfide. Residues H44 and D93 each act as charge relay system in the active site. 3 cysteine pairs are disulfide-bonded: C127–C197, C158–C176, and C187–C219. The Charge relay system role is filled by S191.

The protein belongs to the peptidase S1 family.

In Lumbricus rubellus (Humus earthworm), this protein is Fibrinolytic enzyme, isozyme C.